We begin with the raw amino-acid sequence, 151 residues long: Deoxyuridine 5'-triphosphate nucleotidohydrolase (151 aa).

Residues 70 to 72, asparagine 83, 87 to 89, and methionine 97 contribute to the substrate site; these read RSG and LID.

The protein belongs to the dUTPase family. Requires Mg(2+) as cofactor.

It catalyses the reaction dUTP + H2O = dUMP + diphosphate + H(+). It functions in the pathway pyrimidine metabolism; dUMP biosynthesis; dUMP from dCTP (dUTP route): step 2/2. This enzyme is involved in nucleotide metabolism: it produces dUMP, the immediate precursor of thymidine nucleotides and it decreases the intracellular concentration of dUTP so that uracil cannot be incorporated into DNA. The protein is Deoxyuridine 5'-triphosphate nucleotidohydrolase of Pseudomonas entomophila (strain L48).